The sequence spans 127 residues: Large ribosomal subunit protein bL17 (127 aa).

It belongs to the bacterial ribosomal protein bL17 family. As to quaternary structure, part of the 50S ribosomal subunit. Contacts protein L32.

The sequence is that of Large ribosomal subunit protein bL17 from Alcanivorax borkumensis (strain ATCC 700651 / DSM 11573 / NCIMB 13689 / SK2).